Here is an 80-residue protein sequence, read N- to C-terminus: Small ribosomal subunit protein bS18 (80 aa).

This sequence belongs to the bacterial ribosomal protein bS18 family. In terms of assembly, part of the 30S ribosomal subunit. Forms a tight heterodimer with protein bS6.

In terms of biological role, binds as a heterodimer with protein bS6 to the central domain of the 16S rRNA, where it helps stabilize the platform of the 30S subunit. This chain is Small ribosomal subunit protein bS18, found in Acholeplasma laidlawii (strain PG-8A).